Consider the following 217-residue polypeptide: Ribosomal RNA small subunit methyltransferase G (217 aa).

Residues Gly78, Phe83, 129–130, and Arg146 each bind S-adenosyl-L-methionine; that span reads AE.

It belongs to the methyltransferase superfamily. RNA methyltransferase RsmG family.

It is found in the cytoplasm. The catalysed reaction is guanosine(527) in 16S rRNA + S-adenosyl-L-methionine = N(7)-methylguanosine(527) in 16S rRNA + S-adenosyl-L-homocysteine. Its function is as follows. Specifically methylates the N7 position of guanine in position 527 of 16S rRNA. This chain is Ribosomal RNA small subunit methyltransferase G, found in Geobacter sp. (strain M21).